A 400-amino-acid polypeptide reads, in one-letter code: Phosphoglycerate kinase (400 aa).

Substrate-binding positions include Asp-21 to Asn-23, Arg-37, His-60 to Arg-63, Arg-121, and Arg-154. Residues Lys-204, Glu-326, and Gly-355–Ser-358 each bind ATP.

It belongs to the phosphoglycerate kinase family. In terms of assembly, monomer.

It localises to the cytoplasm. The catalysed reaction is (2R)-3-phosphoglycerate + ATP = (2R)-3-phospho-glyceroyl phosphate + ADP. It participates in carbohydrate degradation; glycolysis; pyruvate from D-glyceraldehyde 3-phosphate: step 2/5. The chain is Phosphoglycerate kinase from Chloroflexus aurantiacus (strain ATCC 29366 / DSM 635 / J-10-fl).